The primary structure comprises 212 residues: Protein GrpE (212 aa).

The tract at residues 1-68 is disordered; the sequence is MAETSNNKTS…ELESAKKEIE (68 aa). Residues 9 to 30 show a composition bias toward basic and acidic residues; sequence TSEEAKANEKKSQSETLEESKL. A compositionally biased stretch (low complexity) spans 40–60; the sequence is ETTQTESMETAETETSLQTEL.

This sequence belongs to the GrpE family. In terms of assembly, homodimer.

It localises to the cytoplasm. Its function is as follows. Participates actively in the response to hyperosmotic and heat shock by preventing the aggregation of stress-denatured proteins, in association with DnaK and GrpE. It is the nucleotide exchange factor for DnaK and may function as a thermosensor. Unfolded proteins bind initially to DnaJ; upon interaction with the DnaJ-bound protein, DnaK hydrolyzes its bound ATP, resulting in the formation of a stable complex. GrpE releases ADP from DnaK; ATP binding to DnaK triggers the release of the substrate protein, thus completing the reaction cycle. Several rounds of ATP-dependent interactions between DnaJ, DnaK and GrpE are required for fully efficient folding. This is Protein GrpE from Leptospira interrogans serogroup Icterohaemorrhagiae serovar copenhageni (strain Fiocruz L1-130).